Consider the following 251-residue polypeptide: Elongation factor Ts (251 aa).

The interval 82 to 85 (TDFV) is involved in Mg(2+) ion dislocation from EF-Tu. The interval 215–251 (QMGQKAPEPVAAAPQVEEKAPEPAAKDNPPAKGKKKK) is disordered. Over residues 219–229 (KAPEPVAAAPQ) the composition is skewed to low complexity. Residues 230–239 (VEEKAPEPAA) are compositionally biased toward basic and acidic residues.

Belongs to the EF-Ts family.

The protein resides in the cytoplasm. In terms of biological role, associates with the EF-Tu.GDP complex and induces the exchange of GDP to GTP. It remains bound to the aminoacyl-tRNA.EF-Tu.GTP complex up to the GTP hydrolysis stage on the ribosome. The polypeptide is Elongation factor Ts (Microcystis aeruginosa (strain NIES-843 / IAM M-2473)).